Consider the following 121-residue polypeptide: Large ribosomal subunit protein uL18 (121 aa).

Belongs to the universal ribosomal protein uL18 family. As to quaternary structure, part of the 50S ribosomal subunit; part of the 5S rRNA/L5/L18/L25 subcomplex. Contacts the 5S and 23S rRNAs.

Functionally, this is one of the proteins that bind and probably mediate the attachment of the 5S RNA into the large ribosomal subunit, where it forms part of the central protuberance. This is Large ribosomal subunit protein uL18 from Bordetella avium (strain 197N).